A 47-amino-acid polypeptide reads, in one-letter code: RECQSQSHRYKGACVHDTNCASVCQTEGFSGGKCVGFRGRCFCTKAC.

4 cysteine pairs are disulfide-bonded: cysteine 3-cysteine 47, cysteine 14-cysteine 34, cysteine 20-cysteine 41, and cysteine 24-cysteine 43.

Functionally, has antifungal activity. Inhibits spore germination in F.graminearum (IC(50)=15 ug/ml), F.oxysporum (IC(50)=102 ug/ml), F.verticillioides (IC(50)=8.5 ug/ml) and D.maydis (IC(50)=12.5 ug/ml), but not in C.graminicola, B.cinerea and H.sativum at concentrations below 30 ug/ml. Inhibits hyphal development in P.infestans (IC(50)=25.5 ug/ml), but not release of zoospores. At concentrations above 100 ug/ml, induces morphological changes such as lysis of hyphae and sporangia in P.infestans. This Echinochloa crus-galli (Barnyard grass) protein is Defensin Ec-AMP-D1.